Here is a 279-residue protein sequence, read N- to C-terminus: Coiled-coil domain-containing protein 117 (279 aa).

The disordered stretch occupies residues M1–P82. At R48 the chain carries Omega-N-methylarginine. S53 is subject to Phosphoserine. Basic residues predominate over residues V63–K72. Residues Q141 to N168 are a coiled coil. A disordered region spans residues L217–L279. Polar residues-rich tracts occupy residues P224 to S235 and S262 to S272.

Interacts with CIAO2B; the interaction is direct. Interacts with MMS19; the interaction is indirect.

Its subcellular location is the cytoplasm. The protein localises to the cytoskeleton. It localises to the spindle. It is found in the nucleus. Its function is as follows. Facilitates DNA repair, cell cycle progression, and cell proliferation through its interaction with CIAO2B. The sequence is that of Coiled-coil domain-containing protein 117 from Homo sapiens (Human).